The following is a 458-amino-acid chain: Phosphoglucosamine mutase (458 aa).

The active-site Phosphoserine intermediate is Ser-106. Residues Ser-106, Asp-247, Asp-249, and Asp-251 each coordinate Mg(2+). At Ser-106 the chain carries Phosphoserine.

The protein belongs to the phosphohexose mutase family. Mg(2+) serves as cofactor. Activated by phosphorylation.

The enzyme catalyses alpha-D-glucosamine 1-phosphate = D-glucosamine 6-phosphate. Its function is as follows. Catalyzes the conversion of glucosamine-6-phosphate to glucosamine-1-phosphate. This Chlamydia caviae (strain ATCC VR-813 / DSM 19441 / 03DC25 / GPIC) (Chlamydophila caviae) protein is Phosphoglucosamine mutase.